We begin with the raw amino-acid sequence, 419 residues long: Appendage-associated protein (419 aa).

The first 39 residues, 1-39 (MIVTYGTVGCPVSRGGSPGCGRRIAEELRLAEDARLRLA), serve as a signal peptide directing secretion. Residues 232–262 (ERQKAQRRREERAAKAREELRKELNDIDAKW) are a coiled coil.

The protein resides in the secreted. In terms of biological role, associates with actin filament appendages that are formed in the inclusion appendages of the parasitophorous vacuole during infection of the host erythrocyte. The protein is Appendage-associated protein of Anaplasma marginale (strain St. Maries).